The primary structure comprises 446 residues: Nuclear distribution protein PAC1-1 (446 aa).

Residues 9-41 enclose the LisH domain; sequence QAEELHKSLIAYLSSINASQSVTTLREELQIGD. Residues 60–86 adopt a coiled-coil conformation; that stretch reads ISVVRLQKRILDLESKIASLQAELDSA. WD repeat units follow at residues 112-153, 155-195, 199-239, 242-281, 284-344, 346-385, 390-430, and 432-446; these read SHRG…RTLK, HTRT…ANIR, GHDH…CVKT, TQGD…ARAS, GHEN…IKTL, GHNN…KLVK, AHEH…TGFR, and VIAT…RVFM.

This sequence belongs to the WD repeat LIS1/nudF family. In terms of assembly, self-associates. Interacts with NDL1 and dynein.

The protein localises to the cytoplasm. Its subcellular location is the cytoskeleton. It is found in the spindle pole. Positively regulates the activity of the minus-end directed microtubule motor protein dynein. May enhance dynein-mediated microtubule sliding by targeting dynein to the microtubule plus end. Required for nuclear migration during vegetative growth as well as development. Required for retrograde early endosome (EE) transport from the hyphal tip. Required for localization of dynein to the mitotic spindle poles. Recruits additional proteins to the dynein complex at SPBs. In Uncinocarpus reesii (strain UAMH 1704), this protein is Nuclear distribution protein PAC1-1.